Here is a 161-residue protein sequence, read N- to C-terminus: N5-carboxyaminoimidazole ribonucleotide mutase (161 aa).

Substrate contacts are provided by serine 9, aspartate 12, and arginine 39.

It belongs to the AIR carboxylase family. Class I subfamily.

The catalysed reaction is 5-carboxyamino-1-(5-phospho-D-ribosyl)imidazole + H(+) = 5-amino-1-(5-phospho-D-ribosyl)imidazole-4-carboxylate. It functions in the pathway purine metabolism; IMP biosynthesis via de novo pathway; 5-amino-1-(5-phospho-D-ribosyl)imidazole-4-carboxylate from 5-amino-1-(5-phospho-D-ribosyl)imidazole (N5-CAIR route): step 2/2. Functionally, catalyzes the conversion of N5-carboxyaminoimidazole ribonucleotide (N5-CAIR) to 4-carboxy-5-aminoimidazole ribonucleotide (CAIR). The sequence is that of N5-carboxyaminoimidazole ribonucleotide mutase from Vibrio parahaemolyticus serotype O3:K6 (strain RIMD 2210633).